The chain runs to 270 residues: Phosphatidylinositol transfer protein alpha isoform (270 aa).

Residues Thr58, Lys60, Glu85, Asn89, Thr96, and Lys194 each contribute to the a 1,2-diacyl-sn-glycero-3-phospho-(1D-myo-inositol) site. Lys215 is subject to N6-acetyllysine. Residues 250–263 (TKRQLDEMRQKDPV) show a composition bias toward basic and acidic residues. A disordered region spans residues 250–270 (TKRQLDEMRQKDPVKGMTADD).

It belongs to the PtdIns transfer protein family. PI transfer class I subfamily. In terms of processing, phosphorylated by PKC in a calcium and phosphatidylserine-dependent manner.

It localises to the cytoplasm. It is found in the nucleus. It carries out the reaction a 1,2-diacyl-sn-glycero-3-phosphocholine(in) = a 1,2-diacyl-sn-glycero-3-phosphocholine(out). The enzyme catalyses a 1,2-diacyl-sn-glycero-3-phospho-(1D-myo-inositol)(in) = a 1,2-diacyl-sn-glycero-3-phospho-(1D-myo-inositol)(out). In terms of biological role, catalyzes the transfer of phosphatidylinositol (PI) and phosphatidylcholine (PC) between membranes. Shows a preference for PI and PC containing shorter saturated or monosaturated acyl chains at the sn-1 and sn-2 positions. Preference order for PC is C16:1 &gt; C16:0 &gt; C18:1 &gt; C18:0 &gt; C20:4 and for PI is C16:1 &gt; C16:0 &gt; C18:1 &gt; C18:0 &gt; C20:4 &gt; C20:3. The chain is Phosphatidylinositol transfer protein alpha isoform (PITPNA) from Oryctolagus cuniculus (Rabbit).